Here is a 330-residue protein sequence, read N- to C-terminus: Phytanoyl-CoA hydroxylase-interacting protein (330 aa).

Positions 6-115 (TPHSIEINNI…ETVEFCTGDY (110 aa)) constitute a Fibronectin type-III domain. N-linked (GlcNAc...) asparagine glycosylation is found at N14 and N325.

It belongs to the PHYHIP family. In terms of assembly, interacts with PHYH and ADGRB1. Highly expressed in the brain.

Its interaction with PHYH suggests a role in the development of the central system. The chain is Phytanoyl-CoA hydroxylase-interacting protein (PHYHIP) from Homo sapiens (Human).